Reading from the N-terminus, the 745-residue chain is Junction plakoglobin (745 aa).

Methionine 1 is modified (N-acetylmethionine). An O-linked (GlcNAc) threonine glycan is attached at threonine 14. Residues serine 99 and serine 125 each carry the phosphoserine modification. ARM repeat units lie at residues asparagine 132 to lysine 171, lysine 172 to histidine 215, arginine 216 to leucine 255, glutamate 258 to tyrosine 297, glycine 298 to cysteine 341, proline 342 to aspartate 381, alanine 383 to cysteine 420, serine 423 to serine 464, glutamate 470 to leucine 510, proline 512 to threonine 551, proline 574 to glutamine 613, and lysine 615 to arginine 661. An interaction with DSC1 and DSG1 region spans residues asparagine 132 to tyrosine 297. Serine 182 carries the post-translational modification Phosphoserine. Positions proline 574–arginine 661 are interaction with DSC1. A phosphoserine mark is found at serine 665 and serine 730.

Belongs to the beta-catenin family. As to quaternary structure, homodimer. Component of an E-cadherin/catenin adhesion complex composed of at least E-cadherin/CDH1 and gamma-catenin/JUP, and possibly alpha-catenin/CTNNA1; the complex is located to adherens junctions. The stable association of CTNNA1 is controversial as CTNNA1 was shown not to bind to F-actin when assembled in the complex. Interacts with MUC1. Interacts with CAV1. Interacts with PTPRJ. Interacts with DSG1. Interacts with DSC1 and DSC2. Interacts with PKP2. Interacts with PKP3 (via N-terminus); the interaction is required for PKP3 localization to desmosome cell-cell junctions. Interacts with DSG4. Post-translationally, may be phosphorylated by FER. As to expression, expressed in the heart (at protein level).

Its subcellular location is the cell junction. It is found in the adherens junction. It localises to the desmosome. The protein resides in the cytoplasm. The protein localises to the cytoskeleton. Its subcellular location is the cell membrane. It is found in the nucleus. Its function is as follows. Common junctional plaque protein. The membrane-associated plaques are architectural elements in an important strategic position to influence the arrangement and function of both the cytoskeleton and the cells within the tissue. The presence of plakoglobin in both the desmosomes and in the intermediate junctions suggests that it plays a central role in the structure and function of submembranous plaques. Acts as a substrate for VE-PTP and is required by it to stimulate VE-cadherin function in endothelial cells. Can replace beta-catenin in E-cadherin/catenin adhesion complexes which are proposed to couple cadherins to the actin cytoskeleton. The chain is Junction plakoglobin from Rattus norvegicus (Rat).